The chain runs to 479 residues: BURP domain-containing protein 4 (479 aa).

The N-terminal stretch at 1 to 46 is a signal peptide; the sequence is MVGKGNECAAARRRFSLRAAAASSSSSSFLPCLLLAAALSAGCCRA. Residues 158 to 177 are disordered; it reads RADGPPKQPATFPASPNGEK. Residues 254–479 form the BURP domain; that stretch reads LFLMKKLHPG…PQGYVLWLAN (226 aa). The N-linked (GlcNAc...) asparagine glycan is linked to asparagine 445.

In terms of tissue distribution, expressed in stamen.

The polypeptide is BURP domain-containing protein 4 (BURP4) (Oryza sativa subsp. japonica (Rice)).